The sequence spans 158 residues: MTEFTHINSNGEANMVDVSNKRETVREARAEAFVSMSAETLAMIVSGEHHKGDVFATARIAGIQAAKRTWELIPLCHPLLLSKVEVKLTALLDTNQVRIESLCKLTGKTGVEMEALTAASVAALTIYDMCKAVQKDMVISNVRLLEKTGGKSGHFKVE.

Residues 75 to 77 and 113 to 114 each bind substrate; these read LCH and ME. D128 is a catalytic residue.

It belongs to the MoaC family. In terms of assembly, homohexamer; trimer of dimers.

It catalyses the reaction (8S)-3',8-cyclo-7,8-dihydroguanosine 5'-triphosphate = cyclic pyranopterin phosphate + diphosphate. The protein operates within cofactor biosynthesis; molybdopterin biosynthesis. In terms of biological role, catalyzes the conversion of (8S)-3',8-cyclo-7,8-dihydroguanosine 5'-triphosphate to cyclic pyranopterin monophosphate (cPMP). This Mannheimia succiniciproducens (strain KCTC 0769BP / MBEL55E) protein is Cyclic pyranopterin monophosphate synthase.